The following is a 361-amino-acid chain: S-adenosylmethionine:tRNA ribosyltransferase-isomerase (361 aa).

Belongs to the QueA family. In terms of assembly, monomer.

The protein resides in the cytoplasm. It carries out the reaction 7-aminomethyl-7-carbaguanosine(34) in tRNA + S-adenosyl-L-methionine = epoxyqueuosine(34) in tRNA + adenine + L-methionine + 2 H(+). Its pathway is tRNA modification; tRNA-queuosine biosynthesis. In terms of biological role, transfers and isomerizes the ribose moiety from AdoMet to the 7-aminomethyl group of 7-deazaguanine (preQ1-tRNA) to give epoxyqueuosine (oQ-tRNA). The protein is S-adenosylmethionine:tRNA ribosyltransferase-isomerase of Actinobacillus pleuropneumoniae serotype 7 (strain AP76).